A 577-amino-acid polypeptide reads, in one-letter code: Arginine--tRNA ligase (577 aa).

A 'HIGH' region motif is present at residues 122–132; that stretch reads PNVAKEMHVGH.

It belongs to the class-I aminoacyl-tRNA synthetase family. Monomer.

The protein resides in the cytoplasm. The enzyme catalyses tRNA(Arg) + L-arginine + ATP = L-arginyl-tRNA(Arg) + AMP + diphosphate. The protein is Arginine--tRNA ligase of Histophilus somni (strain 2336) (Haemophilus somnus).